We begin with the raw amino-acid sequence, 294 residues long: Ribosomal protein L11 methyltransferase (294 aa).

Residues Thr146, Gly167, Asp189, and Asn231 each coordinate S-adenosyl-L-methionine.

Belongs to the methyltransferase superfamily. PrmA family.

Its subcellular location is the cytoplasm. The enzyme catalyses L-lysyl-[protein] + 3 S-adenosyl-L-methionine = N(6),N(6),N(6)-trimethyl-L-lysyl-[protein] + 3 S-adenosyl-L-homocysteine + 3 H(+). In terms of biological role, methylates ribosomal protein L11. This Photobacterium profundum (strain SS9) protein is Ribosomal protein L11 methyltransferase.